Reading from the N-terminus, the 927-residue chain is Protein LONGIFOLIA 1 (927 aa).

4 disordered regions span residues 41 to 198 (TGDE…EGRR), 210 to 257 (YDER…GHRR), 460 to 588 (AQKV…SDSN), and 605 to 626 (YERNSDITEQHTPKQRSPDLGM). Positions 86–114 (SSESSSRLSFSSSPCSSSFSSADISTTAS) are enriched in low complexity. Positions 115–125 (QFEQPGLSNGE) are enriched in polar residues. A compositionally biased stretch (basic and acidic residues) spans 146-165 (DIRELVRSSIHKETRTRDEE). The segment covering 182–193 (KESSPSRNSNEW) has biased composition (polar residues). Residues 210 to 226 (YDERETRKTGAKLKETP) are compositionally biased toward basic and acidic residues. The segment covering 232 to 245 (SRSNSFRSARSSCS) has biased composition (low complexity). Polar residues-rich tracts occupy residues 483–500 (QTESTMKNTSTRPLQSKS) and 538–553 (NKNQRQQLSRQQTESA). Composition is skewed to basic and acidic residues over residues 569–584 (SEDRLSDESSDLRSLR) and 605–616 (YERNSDITEQHT).

In terms of assembly, interacts (via C-terminus) with TON1A and TON1B. As to expression, expressed in roots, petioles, leaf blades and floral organs.

The protein localises to the nucleus. In association with LNG2, regulates leaf morphology by promoting longitudinal polar cell elongation independently of ROT3. This is Protein LONGIFOLIA 1 (LNG1) from Arabidopsis thaliana (Mouse-ear cress).